The following is a 206-amino-acid chain: Large ribosomal subunit protein uL4 (206 aa).

The protein belongs to the universal ribosomal protein uL4 family. As to quaternary structure, part of the 50S ribosomal subunit.

Functionally, one of the primary rRNA binding proteins, this protein initially binds near the 5'-end of the 23S rRNA. It is important during the early stages of 50S assembly. It makes multiple contacts with different domains of the 23S rRNA in the assembled 50S subunit and ribosome. In terms of biological role, forms part of the polypeptide exit tunnel. In Methylobacterium radiotolerans (strain ATCC 27329 / DSM 1819 / JCM 2831 / NBRC 15690 / NCIMB 10815 / 0-1), this protein is Large ribosomal subunit protein uL4.